Consider the following 219-residue polypeptide: Tail fiber protein p36 (219 aa).

The distal half-fiber contains two molecules each of Gp36 and Gp37 and one molecule of Gp35.

Its subcellular location is the virion. In terms of biological role, structural component of the distal-half tail fiber. The sequence is that of Tail fiber protein p36 (36) from Escherichia coli (Bacteriophage T2).